A 213-amino-acid polypeptide reads, in one-letter code: Uridine kinase (213 aa).

15–22 (GASASGKS) serves as a coordination point for ATP.

The protein belongs to the uridine kinase family.

It is found in the cytoplasm. The enzyme catalyses uridine + ATP = UMP + ADP + H(+). It catalyses the reaction cytidine + ATP = CMP + ADP + H(+). The protein operates within pyrimidine metabolism; CTP biosynthesis via salvage pathway; CTP from cytidine: step 1/3. It functions in the pathway pyrimidine metabolism; UMP biosynthesis via salvage pathway; UMP from uridine: step 1/1. This Sodalis glossinidius (strain morsitans) protein is Uridine kinase.